The following is a 121-amino-acid chain: Large ribosomal subunit protein bL12 (121 aa).

It belongs to the bacterial ribosomal protein bL12 family. As to quaternary structure, homodimer. Part of the ribosomal stalk of the 50S ribosomal subunit. Forms a multimeric L10(L12)X complex, where L10 forms an elongated spine to which 2 to 4 L12 dimers bind in a sequential fashion. Binds GTP-bound translation factors.

Functionally, forms part of the ribosomal stalk which helps the ribosome interact with GTP-bound translation factors. Is thus essential for accurate translation. This is Large ribosomal subunit protein bL12 from Klebsiella pneumoniae (strain 342).